Reading from the N-terminus, the 271-residue chain is ATP synthase subunit delta (271 aa).

It belongs to the ATPase delta chain family. F-type ATPases have 2 components, F(1) - the catalytic core - and F(0) - the membrane proton channel. F(1) has five subunits: alpha(3), beta(3), gamma(1), delta(1), epsilon(1). F(0) has three main subunits: a(1), b(2) and c(10-14). The alpha and beta chains form an alternating ring which encloses part of the gamma chain. F(1) is attached to F(0) by a central stalk formed by the gamma and epsilon chains, while a peripheral stalk is formed by the delta and b chains.

Its subcellular location is the cell membrane. Functionally, f(1)F(0) ATP synthase produces ATP from ADP in the presence of a proton or sodium gradient. F-type ATPases consist of two structural domains, F(1) containing the extramembraneous catalytic core and F(0) containing the membrane proton channel, linked together by a central stalk and a peripheral stalk. During catalysis, ATP synthesis in the catalytic domain of F(1) is coupled via a rotary mechanism of the central stalk subunits to proton translocation. This protein is part of the stalk that links CF(0) to CF(1). It either transmits conformational changes from CF(0) to CF(1) or is implicated in proton conduction. This Corynebacterium kroppenstedtii (strain DSM 44385 / JCM 11950 / CIP 105744 / CCUG 35717) protein is ATP synthase subunit delta.